A 274-amino-acid chain; its full sequence is Urease accessory protein UreD (274 aa).

This sequence belongs to the UreD family. UreD, UreF and UreG form a complex that acts as a GTP-hydrolysis-dependent molecular chaperone, activating the urease apoprotein by helping to assemble the nickel containing metallocenter of UreC. The UreE protein probably delivers the nickel.

The protein localises to the cytoplasm. In terms of biological role, required for maturation of urease via the functional incorporation of the urease nickel metallocenter. The protein is Urease accessory protein UreD of Enterobacter sp. (strain 638).